We begin with the raw amino-acid sequence, 90 residues long: Co-chaperonin GroES (90 aa).

It belongs to the GroES chaperonin family. As to quaternary structure, heptamer of 7 subunits arranged in a ring. Interacts with the chaperonin GroEL.

The protein resides in the cytoplasm. Its function is as follows. Together with the chaperonin GroEL, plays an essential role in assisting protein folding. The GroEL-GroES system forms a nano-cage that allows encapsulation of the non-native substrate proteins and provides a physical environment optimized to promote and accelerate protein folding. GroES binds to the apical surface of the GroEL ring, thereby capping the opening of the GroEL channel. This chain is Co-chaperonin GroES, found in Helicobacter hepaticus (strain ATCC 51449 / 3B1).